The sequence spans 228 residues: GrpE protein homolog, mitochondrial (228 aa).

Residues 46 to 57 (DEAKSEESKENN) are compositionally biased toward basic and acidic residues. The tract at residues 46-66 (DEAKSEESKENNEDLTEEQSE) is disordered.

This sequence belongs to the GrpE family. As to quaternary structure, component of the PAM complex, at least composed of SSC1 (mtHsp70), MGE1, TIM44, PAM16/TIM16, PAM17 and PAM18/TIM14. Interacts with SSQ1. The N-terminus is blocked.

The protein resides in the mitochondrion matrix. Functionally, essential component of the PAM complex, a complex required for the translocation of transit peptide-containing proteins from the inner membrane into the mitochondrial matrix in an ATP-dependent manner. Seems to control the nucleotide-dependent binding of SSC1 to substrate proteins and the association of SSC1 with TIM44. This is GrpE protein homolog, mitochondrial (MGE1) from Saccharomyces cerevisiae (strain ATCC 204508 / S288c) (Baker's yeast).